The chain runs to 251 residues: MVNEQKRFALFLATSDSTFVKKAYGGYFNVFVSTFGEDGEQWDLFRVIDGEFPDDKDLDKYDGFVISGSLNDAFGDDDWIVKLCSLCQKLDDMKKKVLGICFGHQILSRIKGGKVGRASRGLDMGLRSITMVTDAVKPGGYFGSQIPKSLAIIKCHQDEVLELPESATLLAYSDKYNVEMCSYGNHLLGIQGHPEYNKEILFEIIDRVVNLKLMEQDFADKAKATMENAEPDRKQWQTLCKNFLKGRSEQV.

In terms of domain architecture, Glutamine amidotransferase type-1 spans 17–214 (STFVKKAYGG…IDRVVNLKLM (198 aa)). The Nucleophile role is filled by Cys-101. Catalysis depends on residues His-193 and Glu-195.

It belongs to the peptidase C26 family.

Its subcellular location is the cytoplasm. The protein resides in the cytosol. It functions in the pathway secondary metabolite biosynthesis. In terms of biological role, involved in glucosinolate biosynthesis. Hydrolyzes the gamma-glutamyl peptide bond of several glutathione (GSH) conjugates to produce Cys-Gly conjugates related to glucosinolates. The gamma-Glu-Cys-Gly-GSH conjugates are the sulfur-donating molecule in glucosinolate biosynthesis. This is Gamma-glutamyl peptidase 5 from Arabidopsis thaliana (Mouse-ear cress).